Consider the following 272-residue polypeptide: Centromere protein V-like protein 3 (272 aa).

Residues 1 to 17 are compositionally biased toward basic residues; the sequence is MGRVRNRATAQRRRRKR. Disordered stretches follow at residues 1-23 and 65-95; these read MGRV…DPPA and RRAR…KELD. Residues 77-88 are compositionally biased toward pro residues; the sequence is PSAPLPDPPAPA. Residues 133–246 enclose the CENP-V/GFA domain; sequence HTGGCHCGAV…EEVGGGDPGE (114 aa). Positions 137, 139, 157, 159, 162, 201, and 204 each coordinate Zn(2+). The disordered stretch occupies residues 240–272; that stretch reads GGGDPGEEAAEEHKAIHKTSSQSAPACPREQEQ.

It belongs to the Gfa family. Requires Zn(2+) as cofactor.

The protein is Centromere protein V-like protein 3 of Homo sapiens (Human).